A 78-amino-acid chain; its full sequence is Protein SlyX homolog (78 aa).

This sequence belongs to the SlyX family.

The sequence is that of Protein SlyX homolog from Xylella fastidiosa (strain M23).